Here is a 370-residue protein sequence, read N- to C-terminus: Ig heavy chain C region (370 aa).

Ig-like domains follow at residues 40-134 (PTVI…RNIT), 145-237 (PAIK…DSIH), and 247-347 (PSVS…RTVN). Residues Asn-98, Asn-132, Asn-177, Asn-343, Asn-347, and Asn-357 are each glycosylated (N-linked (GlcNAc...) asparagine).

The polypeptide is Ig heavy chain C region (Heterodontus francisci (Horn shark)).